Here is a 477-residue protein sequence, read N- to C-terminus: Inner membrane transporter YgjI (477 aa).

Topologically, residues Met-1–Thr-8 are periplasmic. A helical membrane pass occupies residues Ile-9 to Ile-29. Topologically, residues Asn-30–Pro-41 are cytoplasmic. Residues Met-42–Val-62 traverse the membrane as a helical segment. The Periplasmic segment spans residues Ser-63–Arg-83. The helical transmembrane segment at Trp-84–Leu-104 threads the bilayer. Topologically, residues Pro-105–Tyr-120 are cytoplasmic. A helical transmembrane segment spans residues Ile-121–Val-141. Residues Ser-142–Thr-158 are Periplasmic-facing. A helical transmembrane segment spans residues Leu-159 to Val-179. Residues Gln-180 to Trp-196 lie on the Cytoplasmic side of the membrane. Residues Ala-197–Val-217 traverse the membrane as a helical segment. Topologically, residues Tyr-218 to Val-232 are periplasmic. Residues Ile-233–Val-253 form a helical membrane-spanning segment. Residues Phe-254–Thr-263 are Cytoplasmic-facing. The chain crosses the membrane as a helical span at residues Gly-264 to Met-284. The Periplasmic segment spans residues Asn-285–Arg-286. The helical transmembrane segment at Phe-287 to Pro-307 threads the bilayer. The Cytoplasmic segment spans residues Val-308–Arg-335. Residues Ala-336 to Asn-356 traverse the membrane as a helical segment. Over Thr-357 to Thr-364 the chain is Periplasmic. Residues Ile-365–Leu-385 form a helical membrane-spanning segment. The Cytoplasmic portion of the chain corresponds to Asn-386–Thr-405. A helical membrane pass occupies residues Gly-406 to Phe-426. The Periplasmic portion of the chain corresponds to Pro-427–Asn-431. Residues Ile-432–Trp-452 traverse the membrane as a helical segment. The Cytoplasmic portion of the chain corresponds to Lys-453–Asp-477.

The protein belongs to the amino acid-polyamine-organocation (APC) superfamily.

The protein resides in the cell inner membrane. The protein is Inner membrane transporter YgjI (ygjI) of Escherichia coli (strain K12).